Here is a 287-residue protein sequence, read N- to C-terminus: Arylamine N-acetyltransferase, liver isozyme (287 aa).

The active-site Acyl-thioester intermediate is Cys68. Residues His107 and Asp122 contribute to the active site.

It belongs to the arylamine N-acetyltransferase family.

The catalysed reaction is an arylamine + acetyl-CoA = an N-acetylarylamine + CoA. The protein is Arylamine N-acetyltransferase, liver isozyme of Gallus gallus (Chicken).